We begin with the raw amino-acid sequence, 739 residues long: Phosphoribosylformylglycinamidine synthase subunit PurL (739 aa).

Residue histidine 54 is part of the active site. ATP contacts are provided by tyrosine 57 and lysine 96. Glutamate 98 contacts Mg(2+). Substrate-binding positions include 99 to 102 (SHNH) and arginine 121. Catalysis depends on histidine 100, which acts as the Proton acceptor. Mg(2+) is bound at residue aspartate 122. A substrate-binding site is contributed by glutamine 245. Aspartate 275 lines the Mg(2+) pocket. A substrate-binding site is contributed by 319-321 (ESQ). Residues aspartate 504 and glycine 541 each contribute to the ATP site. Asparagine 542 provides a ligand contact to Mg(2+). Serine 544 lines the substrate pocket.

Belongs to the FGAMS family. As to quaternary structure, monomer. Part of the FGAM synthase complex composed of 1 PurL, 1 PurQ and 2 PurS subunits.

Its subcellular location is the cytoplasm. It catalyses the reaction N(2)-formyl-N(1)-(5-phospho-beta-D-ribosyl)glycinamide + L-glutamine + ATP + H2O = 2-formamido-N(1)-(5-O-phospho-beta-D-ribosyl)acetamidine + L-glutamate + ADP + phosphate + H(+). The protein operates within purine metabolism; IMP biosynthesis via de novo pathway; 5-amino-1-(5-phospho-D-ribosyl)imidazole from N(2)-formyl-N(1)-(5-phospho-D-ribosyl)glycinamide: step 1/2. Its function is as follows. Part of the phosphoribosylformylglycinamidine synthase complex involved in the purines biosynthetic pathway. Catalyzes the ATP-dependent conversion of formylglycinamide ribonucleotide (FGAR) and glutamine to yield formylglycinamidine ribonucleotide (FGAM) and glutamate. The FGAM synthase complex is composed of three subunits. PurQ produces an ammonia molecule by converting glutamine to glutamate. PurL transfers the ammonia molecule to FGAR to form FGAM in an ATP-dependent manner. PurS interacts with PurQ and PurL and is thought to assist in the transfer of the ammonia molecule from PurQ to PurL. This is Phosphoribosylformylglycinamidine synthase subunit PurL from Lactococcus lactis subsp. cremoris (Streptococcus cremoris).